Reading from the N-terminus, the 404-residue chain is HAGGKFDGGGYKVSGGLHGVGASVVNALSTELEVFVHRDGKIHYQKYERGVPAADLRVIGETDRTGTITRFKPDSEIFTETTEYEFDTLATRMRELAFLNRNIKLTIEDKREHKQKKEFHYEGGIKSYVEHLNRSKQPIHEEPVYVDGSKDGIQVEVALQYNEGYTNHIYSFTNNIHTYEGGTHEVGFKTALTRVINDYGRKNNILKDADSNLTGEDVREGLTAIVSIKHPNPQFEGQTKTKLGNSEARTITESVFSEAFEKFLLENPNVARKIIDKGTMAARARVAAKKARELTRRKSALEVSSLPGKLADCSSKDPAISEIYIVEGDSAGGSAKQGRDRHFQAILPLKGKIINVEKARLDKILSNDEVRTIITAIGTNIGGDFAIEKARYHKVIIMTDADVD.

One can recognise a Toprim domain in the interval 321–404; sequence SEIYIVEGDS…VIIMTDADVD (84 aa). Residues Glu-327, Asp-400, and Asp-402 each coordinate Mg(2+).

The protein belongs to the type II topoisomerase GyrB family. Heterotetramer, composed of two GyrA and two GyrB chains. In the heterotetramer, GyrA contains the active site tyrosine that forms a transient covalent intermediate with DNA, while GyrB binds cofactors and catalyzes ATP hydrolysis. Mg(2+) serves as cofactor. It depends on Mn(2+) as a cofactor. The cofactor is Ca(2+).

It is found in the cytoplasm. It carries out the reaction ATP-dependent breakage, passage and rejoining of double-stranded DNA.. Functionally, a type II topoisomerase that negatively supercoils closed circular double-stranded (ds) DNA in an ATP-dependent manner to modulate DNA topology and maintain chromosomes in an underwound state. Negative supercoiling favors strand separation, and DNA replication, transcription, recombination and repair, all of which involve strand separation. Also able to catalyze the interconversion of other topological isomers of dsDNA rings, including catenanes and knotted rings. Type II topoisomerases break and join 2 DNA strands simultaneously in an ATP-dependent manner. This chain is DNA gyrase subunit B (gyrB), found in Bacillus mycoides.